The following is a 454-amino-acid chain: MVRLAAELLLLLGLLLLTLHITVLRGSGASDRQDAAAGNNNLNLESDSTSETSFPLSKEAPEEHQVVHQPFPRQRFPPETGHPSLQRDGPRSFLLDLPNFPDLSKADINGQNPNIQVTIEVVDGPDSEAEKDQHPENKPSWSLPAPDWRAWWQRSLSLARTNSGDQDDKYDSTSDDSNFLSVPRGWDRPAPGHRTFETKEQPEYDSTDGEGDWSLWSVCSVTCGNGNQKRTRSCGYACIATESRTCDRPNCPGIEDTFRTAATEVSLLAGSEEFNATKLFEVDMDSCERWMSCKSEFLKKYMHKVINDLPSCPCSYPTEVAYSTADIFDRIKRKDFRWKDASGPKEKLEIYKPTARYCIRSMLSLESTTLAAQHCCYGDNMQLITRGKGAGTPNLISTEFSAELHYKVDVLPWIICKGDWSRYNEARPPNNGQKCTESPSDEDYIKQFQEAREY.

Positions 1–29 (MVRLAAELLLLLGLLLLTLHITVLRGSGA) are cleaved as a signal peptide. Disordered regions lie at residues 29–93 (ASDR…PRSF), 125–144 (PDSE…WSLP), and 161–209 (TNSG…STDG). Over residues 38-55 (GNNNLNLESDSTSETSFP) the composition is skewed to polar residues. Residues 128-137 (EAEKDQHPEN) show a composition bias toward basic and acidic residues. The region spanning 208 to 252 (DGEGDWSLWSVCSVTCGNGNQKRTRSCGYACIATESRTCDRPNCP) is the TSP type-1 domain. Disulfide bonds link Cys219-Cys246, Cys223-Cys251, and Cys234-Cys238. Residues 279–442 (LFEVDMDSCE…QKCTESPSDE (164 aa)) form the AMOP domain.

The protein belongs to the isthmin family. As to quaternary structure, interacts with integrin ITGAV/ITGB5.

The protein resides in the secreted. In terms of biological role, acts as an angiogenesis inhibitor. This chain is Isthmin-1 (Ism1), found in Mus musculus (Mouse).